A 519-amino-acid polypeptide reads, in one-letter code: Anthranilate synthase component 1 (519 aa).

Residues T40 and P293–M295 contribute to the L-tryptophan site. G330–T331 provides a ligand contact to chorismate. E363 contacts Mg(2+). Chorismate is bound by residues Y451, R471, G485–G487, and G487. E500 serves as a coordination point for Mg(2+).

Belongs to the anthranilate synthase component I family. Heterotetramer consisting of two non-identical subunits: a beta subunit (TrpG) and a large alpha subunit (TrpE). The cofactor is Mg(2+).

It carries out the reaction chorismate + L-glutamine = anthranilate + pyruvate + L-glutamate + H(+). The protein operates within amino-acid biosynthesis; L-tryptophan biosynthesis; L-tryptophan from chorismate: step 1/5. With respect to regulation, feedback inhibited by tryptophan. Its function is as follows. Part of a heterotetrameric complex that catalyzes the two-step biosynthesis of anthranilate, an intermediate in the biosynthesis of L-tryptophan. In the first step, the glutamine-binding beta subunit (TrpG) of anthranilate synthase (AS) provides the glutamine amidotransferase activity which generates ammonia as a substrate that, along with chorismate, is used in the second step, catalyzed by the large alpha subunit of AS (TrpE) to produce anthranilate. In the absence of TrpG, TrpE can synthesize anthranilate directly from chorismate and high concentrations of ammonia. The sequence is that of Anthranilate synthase component 1 (trpE) from Buchnera aphidicola subsp. Diuraphis noxia.